We begin with the raw amino-acid sequence, 6306 residues long: Adhesion G-protein coupled receptor V1 (6306 aa).

The N-terminal stretch at 1–29 is a signal peptide; the sequence is MSVFLGPGMPSASLLVNLLSALLILFVFG. 22 Calx-beta domains span residues 30–117, 133–237, 262–362, 388–488, 645–745, 763–861, 876–979, 993–1093, 1108–1208, 1444–1544, 1564–1665, 1710–1809, 1850–1952, 1966–2079, 2107–2206, 2222–2324, 2441–2541, 2584–2676, 2689–2789, 2814–2925, 2947–3048, and 3063–3172; these read ETEI…FHLT, VTVT…IQLK, PVRF…HIML, KPYG…LQIL, PAIA…TLSL, DLII…VVLS, VNIT…VILL, ATLR…IILL, TVII…LKLV, AMPR…FILK, TIQK…RVTL, TGLP…VELL, ILVT…VSVL, TLTV…IELL, QLII…VQLM, VIII…VQLT, TLCL…FLIS, NISP…VSLV, DTVR…QVIL, LTVE…VNLT, TAQV…LILT, and LIIV…CTLF. The Extracellular segment spans residues 30–5908; sequence ETEIRFTGQT…TDNLSSYNEA (5879 aa). EAR repeat units follow at residues 3255 to 3296, 3297 to 3345, 3348 to 3393, 3395 to 3439, 3441 to 3488, and 3492 to 3534; these read VFSV…RWQG, IFIP…TFTS, KLFL…RWNG, SFVL…RWSG, GFIN…IWEM, and SFRY…CWNS. 13 consecutive Calx-beta domains span residues 3525 to 3625, 3639 to 3739, 3775 to 3875, 3899 to 4006, 4020 to 4123, 4139 to 4239, 4255 to 4354, 4387 to 4489, 4512 to 4612, 4634 to 4734, 4992 to 5095, 5288 to 5332, and 5368 to 5468; these read DMSA…KVQL, SVTI…IVTL, GLVG…VTIT, AEIM…ISLI, VTVV…IQLI, IIIR…EFQL, ANIT…LTIT, RIII…ILLT, SPFG…IIKL, EFGD…VIQL, SGFI…INLT, AVEE…YVFL, and IGFS…FVEL. The GAIN-B domain occupies 5747 to 5903; the sequence is SILALHWYPQ…AVYARTDNLS (157 aa). Cystine bridges form between C5856/C5885 and C5873/C5887. A GPS region spans residues 5856-5903; the sequence is CLLWNQAAASWLSDSQFCKVVEETADYVECACSHMSVYAVYARTDNLS. Residues 5909-5929 traverse the membrane as a helical segment; sequence FFTSGFICISGLCLAVLSHIF. Residues 5930–5939 are Cytoplasmic-facing; the sequence is CARYSMFAAK. Residues 5940–5960 form a helical membrane-spanning segment; it reads LLTHMMAASLGTQILFLASAY. At 5961–5979 the chain is on the extracellular side; it reads ASPQLAEESCSAMAAVTHY. A helical transmembrane segment spans residues 5980–6000; sequence LYLCQFSWMLIQSVNFWYVLV. The Cytoplasmic segment spans residues 6001-6010; the sequence is MNDEHTERRY. A helical transmembrane segment spans residues 6011 to 6031; it reads LLFFLLSWGLPAFVVILLIVI. The Extracellular portion of the chain corresponds to 6032-6059; the sequence is LKGIYHQSMSQIYGLIHGDLCFIPNVYA. Residues 6060–6080 traverse the membrane as a helical segment; that stretch reads ALFTAALVPLTCLVVVFVVFI. At 6081–6104 the chain is on the cytoplasmic side; that stretch reads HAYQVKPQWKAYDDVFRGRTNAAE. The chain crosses the membrane as a helical span at residues 6105–6125; sequence IPLILYLFALISVTWLWGGLH. The Extracellular portion of the chain corresponds to 6126 to 6133; that stretch reads MAYRHFWM. Residues 6134–6154 traverse the membrane as a helical segment; the sequence is LVLFVIFNSLQGLYVFMVYFI. Topologically, residues 6155–6306 are cytoplasmic; that stretch reads LHNQMCCPMK…RRIPIADTHL (152 aa). The interval 6216–6248 is disordered; the sequence is ASFQQGSQASPDLKPSPQNGATFPSSGGYGQGS. The span at 6217–6240 shows a compositional bias: polar residues; the sequence is SFQQGSQASPDLKPSPQNGATFPS.

This sequence belongs to the G-protein coupled receptor 2 family. Adhesion G-protein coupled receptor (ADGR) subfamily. Forms a heterodimer, consisting of a large extracellular region (alpha subunit) non-covalently linked to a seven-transmembrane moiety (beta subunit). Component of USH2 complex, composed of ADGRV1, PDZD7, USH2A and WHRN. Interacts with USH2A and WHRN. Interacts (via the cytoplasmic region) with PDZD7. Interacts (via the cytoplasmic region) with MYO7A (via MyTH4-FERM domains). In terms of processing, autoproteolytically cleaved into 2 subunits, an extracellular alpha subunit and a seven-transmembrane subunit. As to expression, expressed at low levels in adult tissues.

It localises to the cell membrane. Its subcellular location is the cell projection. It is found in the stereocilium membrane. The protein resides in the photoreceptor inner segment. G-protein coupled receptor which has an essential role in the development of hearing and vision. Couples to G-alpha(i)-proteins, GNAI1/2/3, G-alpha(q)-proteins, GNAQ, as well as G-alpha(s)-proteins, GNAS, inhibiting adenylate cyclase (AC) activity and cAMP production. Required for the hair bundle ankle formation, which connects growing stereocilia in developing cochlear hair cells of the inner ear. In response to extracellular calcium, activates kinases PKA and PKC to regulate myelination by inhibiting the ubiquitination of MAG, thus enhancing the stability of this protein in myelin-forming cells of the auditory pathway. In retina photoreceptors, the USH2 complex is required for the maintenance of periciliary membrane complex that seems to play a role in regulating intracellular protein transport. Involved in the regulation of bone metabolism. Functionally, cleaved ADGRV1 beta-subunit couples with G-alpha(i)-proteins, GNAI1/2/3, and constitutively inhibits adenylate cyclase (AC) activity with a stronger effect than full ADGRV1. This chain is Adhesion G-protein coupled receptor V1, found in Homo sapiens (Human).